A 229-amino-acid chain; its full sequence is Octanoyltransferase (229 aa).

A BPL/LPL catalytic domain is found at 45–220 (ATAVDELWVV…ELARQFCFVL (176 aa)). Residues 84–91 (RGGQVTYH), 151–153 (ALG), and 164–166 (GVA) contribute to the substrate site. The active-site Acyl-thioester intermediate is Cys182.

It belongs to the LipB family.

The protein resides in the cytoplasm. It catalyses the reaction octanoyl-[ACP] + L-lysyl-[protein] = N(6)-octanoyl-L-lysyl-[protein] + holo-[ACP] + H(+). Its pathway is protein modification; protein lipoylation via endogenous pathway; protein N(6)-(lipoyl)lysine from octanoyl-[acyl-carrier-protein]: step 1/2. Catalyzes the transfer of endogenously produced octanoic acid from octanoyl-acyl-carrier-protein onto the lipoyl domains of lipoate-dependent enzymes. Lipoyl-ACP can also act as a substrate although octanoyl-ACP is likely to be the physiological substrate. The protein is Octanoyltransferase of Xylella fastidiosa (strain 9a5c).